We begin with the raw amino-acid sequence, 164 residues long: ATP synthase subunit b (164 aa).

Residues 10–32 traverse the membrane as a helical segment; sequence AVAFVLFFVLFGKKLWTPLAAAL.

This sequence belongs to the ATPase B chain family. F-type ATPases have 2 components, F(1) - the catalytic core - and F(0) - the membrane proton channel. F(1) has five subunits: alpha(3), beta(3), gamma(1), delta(1), epsilon(1). F(0) has three main subunits: a(1), b(2) and c(10-14). The alpha and beta chains form an alternating ring which encloses part of the gamma chain. F(1) is attached to F(0) by a central stalk formed by the gamma and epsilon chains, while a peripheral stalk is formed by the delta and b chains.

The protein resides in the cell inner membrane. Its function is as follows. F(1)F(0) ATP synthase produces ATP from ADP in the presence of a proton or sodium gradient. F-type ATPases consist of two structural domains, F(1) containing the extramembraneous catalytic core and F(0) containing the membrane proton channel, linked together by a central stalk and a peripheral stalk. During catalysis, ATP synthesis in the catalytic domain of F(1) is coupled via a rotary mechanism of the central stalk subunits to proton translocation. Component of the F(0) channel, it forms part of the peripheral stalk, linking F(1) to F(0). This Gluconacetobacter diazotrophicus (strain ATCC 49037 / DSM 5601 / CCUG 37298 / CIP 103539 / LMG 7603 / PAl5) protein is ATP synthase subunit b.